The primary structure comprises 282 residues: 4-diphosphocytidyl-2-C-methyl-D-erythritol kinase (282 aa).

Residue K8 is part of the active site. 91–101 (PVAAGLAGGST) is a binding site for ATP. D133 is an active-site residue.

The protein belongs to the GHMP kinase family. IspE subfamily.

The enzyme catalyses 4-CDP-2-C-methyl-D-erythritol + ATP = 4-CDP-2-C-methyl-D-erythritol 2-phosphate + ADP + H(+). Its pathway is isoprenoid biosynthesis; isopentenyl diphosphate biosynthesis via DXP pathway; isopentenyl diphosphate from 1-deoxy-D-xylulose 5-phosphate: step 3/6. Catalyzes the phosphorylation of the position 2 hydroxy group of 4-diphosphocytidyl-2C-methyl-D-erythritol. The protein is 4-diphosphocytidyl-2-C-methyl-D-erythritol kinase of Symbiobacterium thermophilum (strain DSM 24528 / JCM 14929 / IAM 14863 / T).